A 450-amino-acid polypeptide reads, in one-letter code: Signal recognition particle protein (450 aa).

GTP-binding positions include 107–114, 190–194, and 248–251; these read GLQGVGKT, DTAGR, and TKTD.

This sequence belongs to the GTP-binding SRP family. SRP54 subfamily. As to quaternary structure, part of the signal recognition particle protein translocation system, which is composed of SRP and FtsY. SRP is a ribonucleoprotein composed of Ffh and a 4.5S RNA molecule.

The protein localises to the cytoplasm. The catalysed reaction is GTP + H2O = GDP + phosphate + H(+). Functionally, involved in targeting and insertion of nascent membrane proteins into the cytoplasmic membrane. Binds to the hydrophobic signal sequence of the ribosome-nascent chain (RNC) as it emerges from the ribosomes. The SRP-RNC complex is then targeted to the cytoplasmic membrane where it interacts with the SRP receptor FtsY. Interaction with FtsY leads to the transfer of the RNC complex to the Sec translocase for insertion into the membrane, the hydrolysis of GTP by both Ffh and FtsY, and the dissociation of the SRP-FtsY complex into the individual components. The sequence is that of Signal recognition particle protein from Buchnera aphidicola subsp. Schizaphis graminum (strain Sg).